The chain runs to 150 residues: Deoxyuridine 5'-triphosphate nucleotidohydrolase (150 aa).

Substrate is bound by residues 69 to 71, Asn82, 86 to 88, and Met96; these read RSG and LID.

It belongs to the dUTPase family. Mg(2+) is required as a cofactor.

It carries out the reaction dUTP + H2O = dUMP + diphosphate + H(+). It functions in the pathway pyrimidine metabolism; dUMP biosynthesis; dUMP from dCTP (dUTP route): step 2/2. Functionally, this enzyme is involved in nucleotide metabolism: it produces dUMP, the immediate precursor of thymidine nucleotides and it decreases the intracellular concentration of dUTP so that uracil cannot be incorporated into DNA. The polypeptide is Deoxyuridine 5'-triphosphate nucleotidohydrolase (Leptothrix cholodnii (strain ATCC 51168 / LMG 8142 / SP-6) (Leptothrix discophora (strain SP-6))).